The sequence spans 423 residues: COP9 signalosome complex subunit 3 (423 aa).

At alanine 2 the chain carries N-acetylalanine. The PCI domain maps to 197-365; sequence NFERALYFYE…GMVSFHDNPE (169 aa). The disordered stretch occupies residues 402-423; it reads QFVQKSMGSQEDDSGNKPSSYS. 3 positions are modified to phosphoserine: serine 407, serine 410, and serine 423.

It belongs to the CSN3 family. Component of the CSN complex, composed of COPS1/GPS1, COPS2, COPS3, COPS4, COPS5, COPS6, COPS7 (COPS7A or COPS7B), COPS8 and COPS9. In the complex, it probably interacts directly with COPS1, COPS4, COPS8 and COPS9. Interacts with CK2 and PKD. Interacts with the translation initiation factor EIF3S6 and IKBKG. Interacts with ERCC6. As to expression, widely expressed.

It is found in the cytoplasm. The protein resides in the nucleus. In terms of biological role, component of the COP9 signalosome complex (CSN), a complex involved in various cellular and developmental processes. The CSN complex is an essential regulator of the ubiquitin (Ubl) conjugation pathway by mediating the deneddylation of the cullin subunits of SCF-type E3 ligase complexes, leading to decrease the Ubl ligase activity of SCF-type complexes such as SCF, CSA or DDB2. The complex is also involved in phosphorylation of p53/TP53, c-jun/JUN, IkappaBalpha/NFKBIA, ITPK1 and IRF8/ICSBP, possibly via its association with CK2 and PKD kinases. CSN-dependent phosphorylation of TP53 and JUN promotes and protects degradation by the Ubl system, respectively. Essential to maintain the survival of epiblast cells and thus the development of the postimplantation embryo. The chain is COP9 signalosome complex subunit 3 (Cops3) from Mus musculus (Mouse).